The following is a 512-amino-acid chain: Methionine--tRNA ligase (512 aa).

A 'HIGH' region motif is present at residues 11–21 (YYASGKPHIGH). Residues Cys-126, Cys-129, Cys-143, and His-147 each coordinate Zn(2+). Positions 301–305 (KMSKS) match the 'KMSKS' region motif. Lys-304 provides a ligand contact to ATP.

This sequence belongs to the class-I aminoacyl-tRNA synthetase family. MetG type 2A subfamily. As to quaternary structure, monomer. It depends on Zn(2+) as a cofactor.

Its subcellular location is the cytoplasm. The enzyme catalyses tRNA(Met) + L-methionine + ATP = L-methionyl-tRNA(Met) + AMP + diphosphate. Is required not only for elongation of protein synthesis but also for the initiation of all mRNA translation through initiator tRNA(fMet) aminoacylation. In Mycoplasma genitalium (strain ATCC 33530 / DSM 19775 / NCTC 10195 / G37) (Mycoplasmoides genitalium), this protein is Methionine--tRNA ligase (metG).